The following is a 396-amino-acid chain: MRAAYACDPMATRGRAVVEEESAHRSPFQRDRDRIIHSSAFRRLKHKTQVFVEHEGDYFRTRLTHSLEVAQVARTMARALGLDEDLTETVALAHDLGHPPFGHTGEDALSALMAPYGGYDHNAQALRIVTHLERHYAEFDGLNLTWETLEGIAKHNGPVAAPLPWALEASCADINLELSTHASAEAQVAALADDIAYNHHDLHDGLRAELFSTDELAGLPILKGCFAAVDQRYPGLNYYRRRHEALRRFFGVLVEDVLANARAALAEINPQSAMDIRNAGRPIIRFSNGLFADLQVIRTFLFKRMYRAPSVVEMRTQVTQVVEDLFPFFLETPSELPRQWRKDVEDVAGDATQLARIVSDYISGMTDRFALQCHQRLIGGAQDGTVTGPSTLNFGA.

The region spanning 62-198 (RLTHSLEVAQ…AALADDIAYN (137 aa)) is the HD domain.

The protein belongs to the dGTPase family. Type 2 subfamily.

The sequence is that of Deoxyguanosinetriphosphate triphosphohydrolase-like protein from Jannaschia sp. (strain CCS1).